A 132-amino-acid polypeptide reads, in one-letter code: MSFTDPIGDMLTRIRNASSARHEKVLVPASRLKVRIAEVLREEGFIKDFVLHEDGVQGAITIVLKYSADREPAISDIKRVSKPGLRRYVATDSIPRVLNGMGVAILSTSKGVMVDREARKQKVGGELICTVW.

It belongs to the universal ribosomal protein uS8 family. Part of the 30S ribosomal subunit. Contacts proteins S5 and S12.

In terms of biological role, one of the primary rRNA binding proteins, it binds directly to 16S rRNA central domain where it helps coordinate assembly of the platform of the 30S subunit. In Anaeromyxobacter dehalogenans (strain 2CP-1 / ATCC BAA-258), this protein is Small ribosomal subunit protein uS8.